Reading from the N-terminus, the 81-residue chain is NAD(P)H-quinone oxidoreductase subunit O (81 aa).

It belongs to the complex I NdhO subunit family. In terms of assembly, NDH-1 can be composed of about 15 different subunits; different subcomplexes with different compositions have been identified which probably have different functions.

The protein resides in the cellular thylakoid membrane. The enzyme catalyses a plastoquinone + NADH + (n+1) H(+)(in) = a plastoquinol + NAD(+) + n H(+)(out). The catalysed reaction is a plastoquinone + NADPH + (n+1) H(+)(in) = a plastoquinol + NADP(+) + n H(+)(out). In terms of biological role, NDH-1 shuttles electrons from an unknown electron donor, via FMN and iron-sulfur (Fe-S) centers, to quinones in the respiratory and/or the photosynthetic chain. The immediate electron acceptor for the enzyme in this species is believed to be plastoquinone. Couples the redox reaction to proton translocation, and thus conserves the redox energy in a proton gradient. Cyanobacterial NDH-1 also plays a role in inorganic carbon-concentration. The polypeptide is NAD(P)H-quinone oxidoreductase subunit O (Prochlorococcus marinus (strain MIT 9303)).